The following is a 330-amino-acid chain: Diacylglycerol acyltransferase/mycolyltransferase Ag85B (330 aa).

The N-terminal stretch at 1-40 (MTDLSEKVRAWGRRLVVGAAAAATLPGLIGIAGGAATANA) is a signal peptide. 82-83 (LR) contacts substrate. Positions 98 to 108 (FEWYYQSGLSV) are fibronectin-binding. A disulfide bond links C127 and C132. Substrate contacts are provided by S166 and D194. S166 serves as the catalytic Nucleophile. E270 is an active-site residue. Substrate is bound by residues 272 to 275 (FVRS), K279, and 302 to 304 (HSW). The active site involves H302.

This sequence belongs to the mycobacterial A85 antigen family.

It is found in the secreted. The catalysed reaction is 2 alpha,alpha'-trehalose 6-mycolate = alpha,alpha'-trehalose 6,6'-bismycolate + alpha,alpha-trehalose. It carries out the reaction an acyl-CoA + a 1,2-diacyl-sn-glycerol = a triacyl-sn-glycerol + CoA. The antigen 85 proteins (FbpA, FbpB, FbpC) are responsible for the high affinity of mycobacteria for fibronectin, a large adhesive glycoprotein, which facilitates the attachment of M.tuberculosis to murine alveolar macrophages (AMs). They also help to maintain the integrity of the cell wall by catalyzing the transfer of mycolic acids to cell wall arabinogalactan and through the synthesis of alpha,alpha-trehalose dimycolate (TDM, cord factor). They catalyze the transfer of a mycoloyl residue from one molecule of alpha,alpha-trehalose monomycolate (TMM) to another TMM, leading to the formation of TDM. This Mycobacterium intracellulare (strain ATCC 13950 / DSM 43223 / JCM 6384 / NCTC 13025 / 3600) protein is Diacylglycerol acyltransferase/mycolyltransferase Ag85B (fbpB).